We begin with the raw amino-acid sequence, 98 residues long: Large ribosomal subunit protein bL25 (98 aa).

The protein belongs to the bacterial ribosomal protein bL25 family. In terms of assembly, part of the 50S ribosomal subunit; part of the 5S rRNA/L5/L18/L25 subcomplex. Contacts the 5S rRNA. Binds to the 5S rRNA independently of L5 and L18.

Its function is as follows. This is one of the proteins that binds to the 5S RNA in the ribosome where it forms part of the central protuberance. The protein is Large ribosomal subunit protein bL25 of Synechocystis sp. (strain ATCC 27184 / PCC 6803 / Kazusa).